We begin with the raw amino-acid sequence, 403 residues long: Phosphoglycerate kinase (403 aa).

Residues Asp21–Asn23, Arg36, His59–Arg62, Arg119, and Arg154 contribute to the substrate site. Residues Lys207, Gly299, Glu330, and Gly357–Ala360 each bind ATP.

This sequence belongs to the phosphoglycerate kinase family. In terms of assembly, monomer.

It localises to the cytoplasm. The catalysed reaction is (2R)-3-phosphoglycerate + ATP = (2R)-3-phospho-glyceroyl phosphate + ADP. Its pathway is carbohydrate degradation; glycolysis; pyruvate from D-glyceraldehyde 3-phosphate: step 2/5. The chain is Phosphoglycerate kinase from Chlamydia trachomatis serovar A (strain ATCC VR-571B / DSM 19440 / HAR-13).